A 363-amino-acid polypeptide reads, in one-letter code: UDP-N-acetylglucosamine--N-acetylmuramyl-(pentapeptide) pyrophosphoryl-undecaprenol N-acetylglucosamine transferase (363 aa).

UDP-N-acetyl-alpha-D-glucosamine-binding positions include 12-14 (TAG), Arg-166, Ser-196, and Gln-291.

It belongs to the glycosyltransferase 28 family. MurG subfamily.

It localises to the cell inner membrane. The enzyme catalyses di-trans,octa-cis-undecaprenyl diphospho-N-acetyl-alpha-D-muramoyl-L-alanyl-D-glutamyl-meso-2,6-diaminopimeloyl-D-alanyl-D-alanine + UDP-N-acetyl-alpha-D-glucosamine = di-trans,octa-cis-undecaprenyl diphospho-[N-acetyl-alpha-D-glucosaminyl-(1-&gt;4)]-N-acetyl-alpha-D-muramoyl-L-alanyl-D-glutamyl-meso-2,6-diaminopimeloyl-D-alanyl-D-alanine + UDP + H(+). It participates in cell wall biogenesis; peptidoglycan biosynthesis. In terms of biological role, cell wall formation. Catalyzes the transfer of a GlcNAc subunit on undecaprenyl-pyrophosphoryl-MurNAc-pentapeptide (lipid intermediate I) to form undecaprenyl-pyrophosphoryl-MurNAc-(pentapeptide)GlcNAc (lipid intermediate II). The protein is UDP-N-acetylglucosamine--N-acetylmuramyl-(pentapeptide) pyrophosphoryl-undecaprenol N-acetylglucosamine transferase of Legionella pneumophila (strain Lens).